We begin with the raw amino-acid sequence, 302 residues long: MKFKRYLQVTKPGIIFGNLISAAGGFLLAAQGSVDWWLLAATVVGLSLVVASGCAINNCIDQDIDAKMARTQKRVLVTGAMSTKAALAHGVVLGLAGFALLWFCTNPLATGCVLFGFVIYVGVYSLYMKRNSVYGTLVGSLSGAVPPVAGYCAVTGRFDMGAAILLLMFSLWQMPHSYAIAIFRFKDYEAAGIPVLPVVKGISAAKQQIVLYILAFAAATVMLVFGGYAGYGYLAVAVATSLWWLKMALSGYKRETDDRAWARQVFFFSIITITSLSVMMAVDGQTPPHSRAVMTADAGHYG.

Transmembrane regions (helical) follow at residues 14–34, 36–56, 85–105, 108–128, 133–153, 163–183, 209–229, 230–250, and 264–284; these read IIFG…QGSV, WWLL…GCAI, AALA…WFCT, LATG…SLYM, VYGT…GYCA, AILL…IAIF, IVLY…GGYA, GYGY…MALS, and QVFF…AVDG.

It belongs to the UbiA prenyltransferase family. Protoheme IX farnesyltransferase subfamily.

The protein resides in the cell inner membrane. It carries out the reaction heme b + (2E,6E)-farnesyl diphosphate + H2O = Fe(II)-heme o + diphosphate. It participates in porphyrin-containing compound metabolism; heme O biosynthesis; heme O from protoheme: step 1/1. Functionally, converts heme B (protoheme IX) to heme O by substitution of the vinyl group on carbon 2 of heme B porphyrin ring with a hydroxyethyl farnesyl side group. The protein is Protoheme IX farnesyltransferase 2 of Chromobacterium violaceum (strain ATCC 12472 / DSM 30191 / JCM 1249 / CCUG 213 / NBRC 12614 / NCIMB 9131 / NCTC 9757 / MK).